The following is a 324-amino-acid chain: Ribosomal RNA small subunit methyltransferase H (324 aa).

S-adenosyl-L-methionine-binding positions include 41-43, aspartate 60, tyrosine 87, aspartate 111, and glutamine 118; that span reads GGH.

This sequence belongs to the methyltransferase superfamily. RsmH family.

The protein resides in the cytoplasm. The catalysed reaction is cytidine(1402) in 16S rRNA + S-adenosyl-L-methionine = N(4)-methylcytidine(1402) in 16S rRNA + S-adenosyl-L-homocysteine + H(+). Its function is as follows. Specifically methylates the N4 position of cytidine in position 1402 (C1402) of 16S rRNA. This chain is Ribosomal RNA small subunit methyltransferase H, found in Nocardia farcinica (strain IFM 10152).